Here is a 79-residue protein sequence, read N- to C-terminus: Large ribosomal subunit protein uL29 (79 aa).

It belongs to the universal ribosomal protein uL29 family.

This Nocardia farcinica (strain IFM 10152) protein is Large ribosomal subunit protein uL29.